The chain runs to 35 residues: MEVNILAFVATALFILIPTAFLLILYIQTAAQNNG.

A helical membrane pass occupies residues 5–25 (ILAFVATALFILIPTAFLLIL).

It belongs to the PsbM family. In terms of assembly, PSII is composed of 1 copy each of membrane proteins PsbA, PsbB, PsbC, PsbD, PsbE, PsbF, PsbH, PsbI, PsbJ, PsbK, PsbL, PsbM, PsbT, PsbX, PsbY, PsbZ, Psb30/Ycf12, at least 3 peripheral proteins of the oxygen-evolving complex and a large number of cofactors. It forms dimeric complexes.

The protein localises to the plastid. Its subcellular location is the chloroplast thylakoid membrane. In terms of biological role, one of the components of the core complex of photosystem II (PSII). PSII is a light-driven water:plastoquinone oxidoreductase that uses light energy to abstract electrons from H(2)O, generating O(2) and a proton gradient subsequently used for ATP formation. It consists of a core antenna complex that captures photons, and an electron transfer chain that converts photonic excitation into a charge separation. This subunit is found at the monomer-monomer interface. This is Photosystem II reaction center protein M from Adiantum capillus-veneris (Maidenhair fern).